The sequence spans 129 residues: UPF0102 protein CT2262 (129 aa).

This sequence belongs to the UPF0102 family.

The polypeptide is UPF0102 protein CT2262 (Chlorobaculum tepidum (strain ATCC 49652 / DSM 12025 / NBRC 103806 / TLS) (Chlorobium tepidum)).